Reading from the N-terminus, the 113-residue chain is U11-theraphotoxin-Hhn1a (113 aa).

Positions 1–21 (MNTVRVAFLLVFVLAVSLGQA) are cleaved as a signal peptide. The propeptide occupies 22 to 74 (DKDENRMEMQEKTEQGKSYLDFAENLLLQKLEELEAKLLEEDSEESRNSRQKR). The interval 61–83 (EEDSEESRNSRQKRCIGEGVPCD) is disordered. 3 disulfides stabilise this stretch: C75–C90, C82–C95, and C89–C110.

It belongs to the neurotoxin 14 (magi-1) family. 01 (HNTX-16) subfamily. Expressed by the venom gland.

The protein resides in the secreted. In terms of biological role, probable ion channel inhibitor. The sequence is that of U11-theraphotoxin-Hhn1a from Cyriopagopus hainanus (Chinese bird spider).